Reading from the N-terminus, the 127-residue chain is D-ribose pyranase (127 aa).

Histidine 20 (proton donor) is an active-site residue. Substrate contacts are provided by residues aspartate 28, histidine 94, and 116–118 (YSN).

This sequence belongs to the RbsD / FucU family. RbsD subfamily. Homodecamer.

It is found in the cytoplasm. It catalyses the reaction beta-D-ribopyranose = beta-D-ribofuranose. The protein operates within carbohydrate metabolism; D-ribose degradation; D-ribose 5-phosphate from beta-D-ribopyranose: step 1/2. Catalyzes the interconversion of beta-pyran and beta-furan forms of D-ribose. This chain is D-ribose pyranase, found in Cutibacterium acnes (strain DSM 16379 / KPA171202) (Propionibacterium acnes).